The chain runs to 311 residues: MAVDIQPACLGLYCGKTLLFKNGSSEIYGECGVCPRGQRTNAQKYCQPCTESPELYDWLYLGFMAMLPLVLHWFFIEWYSGKKSSSALFQHITALFECTMAAIITLLVSDPVGVLYIRSCRVLMLSDWYTMLYNPSPDYVTTVHCTHEAVYPLYTIVFVYYAFCLVLMMLLRPLLVKKIACGLGKSDRFKSIYAALYFFPILTVLQAVGGGLLYYAFPYIILVLSLVTLAVYMSASEIENCYDLLVRKKRLIVLFSHWLLHAYGIVSISRVDRLEHDLPLLALVPTPALFYLFTAKFTEPSRILSEGANGH.

Residues 1–57 lie on the Lumenal side of the membrane; sequence MAVDIQPACLGLYCGKTLLFKNGSSEIYGECGVCPRGQRTNAQKYCQPCTESPELYD. Residue N22 is glycosylated (N-linked (GlcNAc...) asparagine). The helical transmembrane segment at 58 to 78 threads the bilayer; the sequence is WLYLGFMAMLPLVLHWFFIEW. The Cytoplasmic portion of the chain corresponds to 79–87; sequence YSGKKSSSA. The chain crosses the membrane as a helical span at residues 88–108; it reads LFQHITALFECTMAAIITLLV. At 109–149 the chain is on the lumenal side; sequence SDPVGVLYIRSCRVLMLSDWYTMLYNPSPDYVTTVHCTHEA. Residues 150–170 form a helical membrane-spanning segment; the sequence is VYPLYTIVFVYYAFCLVLMML. The Cytoplasmic segment spans residues 171–188; it reads LRPLLVKKIACGLGKSDR. The chain crosses the membrane as a helical span at residues 189–209; sequence FKSIYAALYFFPILTVLQAVG. G210 is a topological domain (lumenal). The helical transmembrane segment at 211-231 threads the bilayer; the sequence is GLLYYAFPYIILVLSLVTLAV. Residues 232–250 lie on the Cytoplasmic side of the membrane; the sequence is YMSASEIENCYDLLVRKKR. A helical membrane pass occupies residues 251–271; the sequence is LIVLFSHWLLHAYGIVSISRV. Residues 272–277 are Lumenal-facing; the sequence is DRLEHD. A helical transmembrane segment spans residues 278-298; sequence LPLLALVPTPALFYLFTAKFT. The Cytoplasmic portion of the chain corresponds to 299–311; the sequence is EPSRILSEGANGH.

As to quaternary structure, interacts with RNF5 and MAPK8, but not with MAPK9. Binding to MAPK8 occurs before and after exposure to stress, such as UV irradiation. After exposure to stress, interacts with phosphorylated MAPK8. Competes with DUSP10 for MAPK8 binding. Associates with multiple components of the proteasome and with ERAD regulatory proteins, including AMFR/GP78, CANX, PSMC1, PSMC2, PSMC3/TBP1, PSMC5, PSMC6, PSMD8, SEC61-ALPHA and UFD1. Ubiquitinated by RNF5 via 'Lys-63'-linked ubiquitin linkage in a UBE2N-dependent manner. Ubiquitination decreases association with components of the proteasome and ERAD. In terms of tissue distribution, expressed in numerous tissues, including brain, spleen, thymus, liver, kidney and testis.

It is found in the endoplasmic reticulum membrane. Regulates the duration of MAPK8 activity in response to various stress stimuli. Facilitates degradation of misfolded endoplasmic reticulum (ER) proteins through the recruitment of components of the proteasome and endoplasmic reticulum-associated degradation (ERAD) system. The polypeptide is JNK1/MAPK8-associated membrane protein (Jkamp) (Mus musculus (Mouse)).